The following is a 628-amino-acid chain: Leucine-rich repeat and fibronectin type-III domain-containing protein 3 (628 aa).

The first 16 residues, 1–16 (MAVLPLLLCLLPLAPA), serve as a signal peptide directing secretion. Topologically, residues 17-540 (SSPPQPASPS…APHAPFLGGT (524 aa)) are extracellular. In terms of domain architecture, LRRNT spans 19–59 (PPQPASPSPCPRRCRCQTQSLPLSVLCPGAGLLFVPPSLDR). LRR repeat units lie at residues 60-83 (RAAE…ANMT), 84-105 (GLLH…AFSD), 108-129 (ALRA…QLRG), 132-153 (NLRH…ALDD), 157-178 (TLED…ALGR), 181-202 (NVNT…AFSR), and 205-226 (KLAR…PLFS). Residues 249-295 (NPLHCNCELVWLRRLAREDDLEACASPPALGGRYFWAVGEEEFVCEP) form the LRRCT domain. In terms of domain architecture, Ig-like spans 295 to 382 (PPVVTHRSPP…GEATAAVELT (88 aa)). Cysteines 317 and 366 form a disulfide. N-linked (GlcNAc...) asparagine glycans are attached at residues Asn348 and Asn393. The interval 380 to 433 (ELTVGPPPPPQLANSTSCDPPRDGEPDALTPPSAASASASAKAAEAGPPTDRGV) is disordered. Residues 410–428 (PPSAASASASAKAAEAGPP) are compositionally biased toward low complexity. Positions 427-525 (PPTDRGVQVT…GCNRFSTEPA (99 aa)) constitute a Fibronectin type-III domain. A helical membrane pass occupies residues 541–561 (MIIALGGVIVASVLVFIFVLL). Topologically, residues 562 to 628 (MRYKVHGGQP…WGPSHEPMGP (67 aa)) are cytoplasmic. The tract at residues 570–609 (QPPGKTKASAPVSSVCSQTNGALGPMPAPPAPEPSAPRAH) is disordered. A compositionally biased stretch (polar residues) spans 580–590 (PVSSVCSQTNG). Residues 595–604 (MPAPPAPEPS) show a composition bias toward pro residues.

The protein belongs to the LRFN family. Can form heteromeric complexes with LRFN1, LRFN2, LRFN4 and LRFN5. Able to form homomeric complexes across cell junctions, between adjacent cells. Does not interact with DLG4. N-glycosylated.

The protein resides in the cell membrane. It localises to the cell projection. The protein localises to the axon. It is found in the dendrite. Its subcellular location is the synapse. The protein resides in the presynaptic cell membrane. It localises to the postsynaptic cell membrane. Cell adhesion molecule that mediates homophilic cell-cell adhesion in a Ca(2+)-independent manner. Promotes neurite outgrowth in hippocampal neurons. The chain is Leucine-rich repeat and fibronectin type-III domain-containing protein 3 (LRFN3) from Bos taurus (Bovine).